Here is a 196-residue protein sequence, read N- to C-terminus: Ribonuclease S-F11 (196 aa).

A disulfide bond links C16 and C21. An N-linked (GlcNAc...) asparagine glycan is attached at N28. H32 (proton donor) is an active-site residue. RNA-binding positions include H32 and 69 to 70 (QL). Cystine bridges form between C46-C94, C153-C186, and C169-C180. Q87 is a catalytic residue. 90–91 (KH) is an RNA binding site. Catalysis depends on H91, which acts as the Proton acceptor.

This sequence belongs to the RNase T2 family. Monomer.

The protein localises to the secreted. Its subcellular location is the extracellular space. The catalysed reaction is a ribonucleotidyl-ribonucleotide-RNA + H2O = a 3'-end 3'-phospho-ribonucleotide-RNA + a 5'-end dephospho-ribonucleoside-RNA + H(+). In terms of biological role, self-incompatibility (SI) is the inherited ability of a flowering plant to prevent self-fertilization by discriminating between self and non-self pollen during pollination. In many species of the Solanaceae, self-incompatibility is controlled by the single, multiallelic locus S. The protein is Ribonuclease S-F11 of Nicotiana alata (Winged tobacco).